The sequence spans 207 residues: Peptidyl-tRNA hydrolase (207 aa).

A tRNA-binding site is contributed by Y15. H20 acts as the Proton acceptor in catalysis. 3 residues coordinate tRNA: F66, N68, and N114. The disordered stretch occupies residues 187–207 (HTTKPPRPKPARPATAESDKG). Residues 198–207 (RPATAESDKG) are compositionally biased toward low complexity.

It belongs to the PTH family. As to quaternary structure, monomer.

The protein localises to the cytoplasm. The catalysed reaction is an N-acyl-L-alpha-aminoacyl-tRNA + H2O = an N-acyl-L-amino acid + a tRNA + H(+). Hydrolyzes ribosome-free peptidyl-tRNAs (with 1 or more amino acids incorporated), which drop off the ribosome during protein synthesis, or as a result of ribosome stalling. Functionally, catalyzes the release of premature peptidyl moieties from peptidyl-tRNA molecules trapped in stalled 50S ribosomal subunits, and thus maintains levels of free tRNAs and 50S ribosomes. This Delftia acidovorans (strain DSM 14801 / SPH-1) protein is Peptidyl-tRNA hydrolase.